The sequence spans 194 residues: Cysteine and glycine-rich protein 2 (194 aa).

The 52-residue stretch at Cys-10–Cys-61 folds into the LIM zinc-binding 1 domain. The short motif at Lys-64–Lys-69 is the Nuclear localization signal element. Residues Cys-120–Cys-171 form the LIM zinc-binding 2 domain.

It localises to the nucleus. Totally down-regulated in transformed cells. May therefore take part in the control of cell growth and differentiation. The protein is Cysteine and glycine-rich protein 2 (CSRP2) of Gallus gallus (Chicken).